We begin with the raw amino-acid sequence, 572 residues long: Urocanate hydratase (572 aa).

NAD(+) contacts are provided by residues 48–49 (GG), Gln126, 172–174 (GMG), Asp192, 238–239 (NA), 259–263 (QTSAH), 268–269 (YL), and Tyr317. Cys405 is an active-site residue. Residue Gly487 participates in NAD(+) binding. Over residues 550–559 (EGDEAHEGDA) the composition is skewed to basic and acidic residues. Positions 550 to 572 (EGDEAHEGDAAHGSGAAREGDGV) are disordered.

This sequence belongs to the urocanase family. The cofactor is NAD(+).

The protein localises to the cytoplasm. The catalysed reaction is 4-imidazolone-5-propanoate = trans-urocanate + H2O. It participates in amino-acid degradation; L-histidine degradation into L-glutamate; N-formimidoyl-L-glutamate from L-histidine: step 2/3. Its function is as follows. Catalyzes the conversion of urocanate to 4-imidazolone-5-propionate. In Streptomyces coelicolor (strain ATCC BAA-471 / A3(2) / M145), this protein is Urocanate hydratase.